Here is a 264-residue protein sequence, read N- to C-terminus: MEMO1 family protein Mbur_2394 (264 aa).

The protein belongs to the MEMO1 family.

In Methanococcoides burtonii (strain DSM 6242 / NBRC 107633 / OCM 468 / ACE-M), this protein is MEMO1 family protein Mbur_2394.